The primary structure comprises 253 residues: Spermatogenesis-associated protein 9 (253 aa).

The chain crosses the membrane as a helical span at residues 144-166 (LTSIMCASYAALIYLTVCVNAVL). Basic and acidic residues predominate over residues 210–228 (AKPYRSLPEKPDSISDRPK). Residues 210–231 (AKPYRSLPEKPDSISDRPKLPA) are disordered.

The protein localises to the membrane. Functionally, may play at role in testicular development/spermatogenesis and may be an important factor in male infertility. The polypeptide is Spermatogenesis-associated protein 9 (SPATA9) (Bos taurus (Bovine)).